We begin with the raw amino-acid sequence, 274 residues long: 2,3,4,5-tetrahydropyridine-2,6-dicarboxylate N-succinyltransferase (274 aa).

Arginine 104 and aspartate 141 together coordinate substrate.

This sequence belongs to the transferase hexapeptide repeat family. As to quaternary structure, homotrimer.

Its subcellular location is the cytoplasm. The enzyme catalyses (S)-2,3,4,5-tetrahydrodipicolinate + succinyl-CoA + H2O = (S)-2-succinylamino-6-oxoheptanedioate + CoA. It functions in the pathway amino-acid biosynthesis; L-lysine biosynthesis via DAP pathway; LL-2,6-diaminopimelate from (S)-tetrahydrodipicolinate (succinylase route): step 1/3. This is 2,3,4,5-tetrahydropyridine-2,6-dicarboxylate N-succinyltransferase from Shewanella frigidimarina (strain NCIMB 400).